Here is a 227-residue protein sequence, read N- to C-terminus: Cytochrome c oxidase subunit 2 (227 aa).

The Mitochondrial intermembrane segment spans residues 1–14; it reads MAHPVQLSLQDATS. The helical transmembrane segment at 15 to 45 threads the bilayer; it reads PIMEELITFHDHAFMAMSLISFLVLYALALT. Over 46–59 the chain is Mitochondrial matrix; that stretch reads LTTKLTNTNITDAQ. A helical transmembrane segment spans residues 60 to 87; the sequence is EMETIWTILPAVILILIALPSLRVLYLT. Residues 88 to 227 lie on the Mitochondrial intermembrane side of the membrane; that stretch reads DEVNDPSLTI…IFEMGPVFTL (140 aa). Cu cation contacts are provided by histidine 161, cysteine 196, glutamate 198, cysteine 200, histidine 204, and methionine 207. A Mg(2+)-binding site is contributed by glutamate 198.

This sequence belongs to the cytochrome c oxidase subunit 2 family. Component of the cytochrome c oxidase (complex IV, CIV), a multisubunit enzyme composed of 14 subunits. The complex is composed of a catalytic core of 3 subunits MT-CO1, MT-CO2 and MT-CO3, encoded in the mitochondrial DNA, and 11 supernumerary subunits COX4I, COX5A, COX5B, COX6A, COX6B, COX6C, COX7A, COX7B, COX7C, COX8 and NDUFA4, which are encoded in the nuclear genome. The complex exists as a monomer or a dimer and forms supercomplexes (SCs) in the inner mitochondrial membrane with NADH-ubiquinone oxidoreductase (complex I, CI) and ubiquinol-cytochrome c oxidoreductase (cytochrome b-c1 complex, complex III, CIII), resulting in different assemblies (supercomplex SCI(1)III(2)IV(1) and megacomplex MCI(2)III(2)IV(2)). Found in a complex with TMEM177, COA6, COX18, COX20, SCO1 and SCO2. Interacts with TMEM177 in a COX20-dependent manner. Interacts with COX20. Interacts with COX16. The cofactor is Cu cation.

The protein localises to the mitochondrion inner membrane. The catalysed reaction is 4 Fe(II)-[cytochrome c] + O2 + 8 H(+)(in) = 4 Fe(III)-[cytochrome c] + 2 H2O + 4 H(+)(out). Component of the cytochrome c oxidase, the last enzyme in the mitochondrial electron transport chain which drives oxidative phosphorylation. The respiratory chain contains 3 multisubunit complexes succinate dehydrogenase (complex II, CII), ubiquinol-cytochrome c oxidoreductase (cytochrome b-c1 complex, complex III, CIII) and cytochrome c oxidase (complex IV, CIV), that cooperate to transfer electrons derived from NADH and succinate to molecular oxygen, creating an electrochemical gradient over the inner membrane that drives transmembrane transport and the ATP synthase. Cytochrome c oxidase is the component of the respiratory chain that catalyzes the reduction of oxygen to water. Electrons originating from reduced cytochrome c in the intermembrane space (IMS) are transferred via the dinuclear copper A center (CU(A)) of subunit 2 and heme A of subunit 1 to the active site in subunit 1, a binuclear center (BNC) formed by heme A3 and copper B (CU(B)). The BNC reduces molecular oxygen to 2 water molecules using 4 electrons from cytochrome c in the IMS and 4 protons from the mitochondrial matrix. In Macaca fascicularis (Crab-eating macaque), this protein is Cytochrome c oxidase subunit 2 (MT-CO2).